We begin with the raw amino-acid sequence, 224 residues long: Protein FAM3D (224 aa).

Positions 1–25 (MRVSGVLRLLALIFAIVTTWMFIRS) are cleaved as a signal peptide. Disulfide bonds link C55/C83 and C61/C218. Residues 64–222 (NYFAFKICSG…LEMEGCMPPK (159 aa)) enclose the GG-type lectin domain. An N-linked (GlcNAc...) asparagine glycan is attached at N107.

This sequence belongs to the FAM3 family. In terms of tissue distribution, abundantly expressed in placenta and weakly expressed in small intestine.

The protein localises to the secreted. This chain is Protein FAM3D (FAM3D), found in Homo sapiens (Human).